We begin with the raw amino-acid sequence, 1044 residues long: Pre-mRNA-splicing factor ATP-dependent RNA helicase DEAH1 (1044 aa).

A disordered region spans residues 106–206; that stretch reads EVVVEKKSSV…TLSKKEKEEA (101 aa). Basic and acidic residues predominate over residues 108–121; that stretch reads VVEKKSSVSESRKS. Positions 122 to 132 are enriched in basic residues; it reads DKGKKRFRKKS. Phosphoserine is present on residues S135 and S138. Residues 157–166 are compositionally biased toward acidic residues; it reads EEDDGSESEE. Positions 167–206 are enriched in basic and acidic residues; sequence ERVRDQKEREELEQHLKDRDTARTRKLTEQTLSKKEKEEA. Residues 414-577 enclose the Helicase ATP-binding domain; the sequence is LKAVEEHQVL…FDTAPIFSFP (164 aa). An ATP-binding site is contributed by 427–434; sequence GDTGSGKT. The short motif at 524–527 is the DEAH box element; it reads DEAH. The region spanning 600 to 775 is the Helicase C-terminal domain; it reads IVTILTIHVR…SVVLALKSLG (176 aa).

This sequence belongs to the DEAD box helicase family. DEAH subfamily. PRP2 sub-subfamily. In terms of tissue distribution, widely expressed.

It carries out the reaction ATP + H2O = ADP + phosphate + H(+). Involved in pre-mRNA splicing. The sequence is that of Pre-mRNA-splicing factor ATP-dependent RNA helicase DEAH1 from Arabidopsis thaliana (Mouse-ear cress).